A 373-amino-acid chain; its full sequence is Cytoplasmic tRNA 2-thiolation protein 1 (373 aa).

The protein belongs to the TtcA family. CTU1/NCS6/ATPBD3 subfamily.

It localises to the cytoplasm. It participates in tRNA modification; 5-methoxycarbonylmethyl-2-thiouridine-tRNA biosynthesis. Plays a central role in 2-thiolation of mcm(5)S(2)U at tRNA wobble positions of tRNA(Lys), tRNA(Glu) and tRNA(Gln). Directly binds tRNAs and probably acts by catalyzing adenylation of tRNAs, an intermediate required for 2-thiolation. It is unclear whether it acts as a sulfurtransferase that transfers sulfur from thiocarboxylated URM1 onto the uridine of tRNAs at wobble position. The polypeptide is Cytoplasmic tRNA 2-thiolation protein 1 (Caenorhabditis elegans).